The chain runs to 224 residues: Octanoyltransferase (224 aa).

The region spanning 33–213 (GTTAETMLLL…ALQAEFGREA (181 aa)) is the BPL/LPL catalytic domain. The tract at residues 51–71 (GKRTTDDERPTDGTPVVDVDR) is disordered. Substrate is bound by residues 71–78 (RGGKITWH), 143–145 (AIG), and 156–158 (GFA). Residue Cys174 is the Acyl-thioester intermediate of the active site.

Belongs to the LipB family.

The protein localises to the cytoplasm. The catalysed reaction is octanoyl-[ACP] + L-lysyl-[protein] = N(6)-octanoyl-L-lysyl-[protein] + holo-[ACP] + H(+). The protein operates within protein modification; protein lipoylation via endogenous pathway; protein N(6)-(lipoyl)lysine from octanoyl-[acyl-carrier-protein]: step 1/2. In terms of biological role, catalyzes the transfer of endogenously produced octanoic acid from octanoyl-acyl-carrier-protein onto the lipoyl domains of lipoate-dependent enzymes. Lipoyl-ACP can also act as a substrate although octanoyl-ACP is likely to be the physiological substrate. The protein is Octanoyltransferase of Leifsonia xyli subsp. xyli (strain CTCB07).